Here is a 223-residue protein sequence, read N- to C-terminus: Endonuclease NucS (223 aa).

The protein belongs to the NucS endonuclease family.

Its subcellular location is the cytoplasm. Its function is as follows. Cleaves both 3' and 5' ssDNA extremities of branched DNA structures. The protein is Endonuclease NucS of Mycobacterium sp. (strain JLS).